Here is a 68-residue protein sequence, read N- to C-terminus: MSLQERVTDLESRLAFQDDTIQALNDVLVAQQRAVERLQLQMAALLKRQEEMVGQFESFEEEAPPPHY.

Belongs to the SlyX family.

The chain is Protein SlyX homolog from Pseudomonas fluorescens (strain ATCC BAA-477 / NRRL B-23932 / Pf-5).